Consider the following 807-residue polypeptide: Phenylalanine--tRNA ligase beta subunit (807 aa).

The tRNA-binding domain occupies 39–153 (SARSQGVVVG…EIPAVGTPVA (115 aa)). Residues 407 to 491 (RTPVPLQLRR…RLVGFDKFGS (85 aa)) form the B5 domain. Positions 469, 475, 478, and 479 each coordinate Mg(2+). One can recognise an FDX-ACB domain in the interval 713–806 (PTVPASERDL…LSKQFKAELR (94 aa)).

It belongs to the phenylalanyl-tRNA synthetase beta subunit family. Type 1 subfamily. As to quaternary structure, tetramer of two alpha and two beta subunits. Mg(2+) is required as a cofactor.

Its subcellular location is the cytoplasm. It carries out the reaction tRNA(Phe) + L-phenylalanine + ATP = L-phenylalanyl-tRNA(Phe) + AMP + diphosphate + H(+). The sequence is that of Phenylalanine--tRNA ligase beta subunit from Synechococcus sp. (strain CC9902).